Here is a 614-residue protein sequence, read N- to C-terminus: Translation initiation factor IF-2 (614 aa).

In terms of domain architecture, tr-type G spans 115–283; it reads ARAPIVTIMG…ILLIAELNDY (169 aa). The tract at residues 124–131 is G1; sequence GHVDHGKT. Residue 124 to 131 participates in GTP binding; the sequence is GHVDHGKT. The interval 149–153 is G2; that stretch reads GITQH. A G3 region spans residues 170 to 173; that stretch reads DTPG. Residues 170–174 and 224–227 contribute to the GTP site; these read DTPGH and NKMD. The segment at 224 to 227 is G4; sequence NKMD. A G5 region spans residues 260–262; sequence SAL.

It belongs to the TRAFAC class translation factor GTPase superfamily. Classic translation factor GTPase family. IF-2 subfamily.

It localises to the cytoplasm. Functionally, one of the essential components for the initiation of protein synthesis. Protects formylmethionyl-tRNA from spontaneous hydrolysis and promotes its binding to the 30S ribosomal subunits. Also involved in the hydrolysis of GTP during the formation of the 70S ribosomal complex. The chain is Translation initiation factor IF-2 from Ureaplasma urealyticum serovar 10 (strain ATCC 33699 / Western).